Here is a 294-residue protein sequence, read N- to C-terminus: Nucleoside-specific channel-forming protein Tsx (294 aa).

An N-terminal signal peptide occupies residues 1–22 (MKKTLLAAGAVLALSSSFTVNA).

Belongs to the nucleoside-specific channel-forming outer membrane porin (Tsx) (TC 1.B.10) family.

The protein localises to the cell outer membrane. Its function is as follows. Functions as a substrate-specific channel for nucleosides and deoxynucleosides. This chain is Nucleoside-specific channel-forming protein Tsx (tsx), found in Escherichia coli O157:H7.